The chain runs to 185 residues: MFDKEKRKKSNIIDWIKAILIALILVFLVRTFLFEPYIVQGESMKPTLFNSERLFVNKFVKYTGDFKRGDIVVLNGEEKKTHYVKRLIGLPGDTIEMKNDNLFVNGKRFNEEYLKENKKDAHDSDLNLTGDFGPIKVPKDKYFVMGDNRQNSMDSRNGLGLFNKKDIVGVEELVFFPLDRIRHAK.

Residues 1-14 are Cytoplasmic-facing; that stretch reads MFDKEKRKKSNIID. A helical transmembrane segment spans residues 15–34; it reads WIKAILIALILVFLVRTFLF. The Extracellular portion of the chain corresponds to 35 to 185; the sequence is EPYIVQGESM…FPLDRIRHAK (151 aa). Catalysis depends on residues serine 43 and lysine 85.

This sequence belongs to the peptidase S26 family.

It localises to the cell membrane. It catalyses the reaction Cleavage of hydrophobic, N-terminal signal or leader sequences from secreted and periplasmic proteins.. The sequence is that of Signal peptidase I P (sipP) from Bacillus subtilis subsp. natto.